Consider the following 492-residue polypeptide: Fascin-2 (492 aa).

This sequence belongs to the fascin family. Expressed in the inner ear. Abundant in the utricle.

It is found in the cytoplasm. It localises to the cytoskeleton. The protein resides in the cell projection. The protein localises to the stereocilium. Functionally, acts as an actin bundling protein. May play a pivotal role in photoreceptor cell-specific events, such as disk morphogenesis. Important for maintaining functional hair-cell bundles in the inner ear. May stiffen the longer stereocilia of hair-cell bundles in the inner ear enabling better force transmission to tip links. This Mus musculus (Mouse) protein is Fascin-2 (Fscn2).